The chain runs to 333 residues: MIDTQLPLTDLHRHLDGNIRPETILDLAQQHNIALPAYELETLRPHVQITKNEPSLVSFLQKLDWGVAVLADLDACRRVAYENVVDVANAGIDYAELRFSPYYMAMKHQLPIEGVVEAIIDGVQSALHTYDVEIRLIGILSRTFGENACQQELNGLLKHQDKITALDLAGDELGFPGHLFQPHFNRARDTGWKITVHAGEAAGAESIWHAIKELGASRIGHGVKAIEDPRLMDYLAEHQIGIESCLTSNIQTSTIASLAQHPLKKFLEHGIIASLNTDDPAVEGIELKHEYTVAAPAAGLTAAQIRQAQINGLTMAFISQAERDALIKKVSLG.

Histidine 12 and histidine 14 together coordinate Zn(2+). Positions 14, 16, and 170 each coordinate substrate. Zn(2+) is bound at residue histidine 197. Glutamate 200 (proton donor) is an active-site residue. Aspartate 278 provides a ligand contact to Zn(2+). Substrate is bound at residue aspartate 279.

Belongs to the metallo-dependent hydrolases superfamily. Adenosine and AMP deaminases family. Adenosine deaminase subfamily. It depends on Zn(2+) as a cofactor.

It carries out the reaction adenosine + H2O + H(+) = inosine + NH4(+). The catalysed reaction is 2'-deoxyadenosine + H2O + H(+) = 2'-deoxyinosine + NH4(+). Catalyzes the hydrolytic deamination of adenosine and 2-deoxyadenosine. This is Adenosine deaminase from Proteus mirabilis (strain HI4320).